A 229-amino-acid polypeptide reads, in one-letter code: Protein fmp52-2, mitochondrial (229 aa).

A mitochondrion-targeting transit peptide spans 1-45 (MTTAAVFGSTGAVGGQILATLLASDAFSSVKTVSRRLPNAQSPKL).

This sequence belongs to the FMP52 family.

The protein localises to the mitochondrion outer membrane. The protein is Protein fmp52-2, mitochondrial (fmp522) of Aspergillus oryzae (strain ATCC 42149 / RIB 40) (Yellow koji mold).